Here is a 595-residue protein sequence, read N- to C-terminus: Alpha-1,3-galactosidase B (595 aa).

The signal sequence occupies residues 1 to 22; sequence MKTILLFALSLLLSLSVSDVCA. 3 PbH1 repeats span residues 432–454, 455–477, and 488–541; these read TPEV…LFST, PKKT…LLCG, and CRDV…VIED.

The protein belongs to the glycosyl hydrolase 110 family. B subfamily.

It carries out the reaction Hydrolysis of terminal, non-reducing branched (1-&gt;3)-alpha-D-galactosidic residues, producing free D-galactose.. It catalyses the reaction Hydrolysis of terminal, non-reducing linear (1-&gt;3)-alpha-D-galactosidic residues, producing free D-galactose.. The catalysed reaction is Hydrolysis of terminal, non-reducing alpha-D-galactose residues in alpha-D-galactosides, including galactose oligosaccharides, galactomannans and galactolipids.. Its function is as follows. Alpha-galactosidase. Removes both branched alpha-1,3-linked galactose residues of blood group B antigens and linear alpha-1,3-linked galactose structures. The polypeptide is Alpha-1,3-galactosidase B (glaB) (Bacteroides fragilis (strain ATCC 25285 / DSM 2151 / CCUG 4856 / JCM 11019 / LMG 10263 / NCTC 9343 / Onslow / VPI 2553 / EN-2)).